A 223-amino-acid chain; its full sequence is Dephospho-CoA kinase (223 aa).

Residues 3–204 (VFGLSGGAGS…AGRHRFRVAR (202 aa)) form the DPCK domain. 11–16 (GSGKST) contributes to the ATP binding site.

It belongs to the CoaE family.

It localises to the cytoplasm. The enzyme catalyses 3'-dephospho-CoA + ATP = ADP + CoA + H(+). The protein operates within cofactor biosynthesis; coenzyme A biosynthesis; CoA from (R)-pantothenate: step 5/5. In terms of biological role, catalyzes the phosphorylation of the 3'-hydroxyl group of dephosphocoenzyme A to form coenzyme A. This Anaplasma marginale (strain St. Maries) protein is Dephospho-CoA kinase.